The following is a 653-amino-acid chain: Threonine--tRNA ligase (653 aa).

In terms of domain architecture, TGS spans 1 to 61 (MIKITFPDGN…NEDAEVKLFK (61 aa)). Residues 243–542 (DHRKIGKELE…LIEHTAGKFP (300 aa)) form a catalytic region. Residues cysteine 338, histidine 389, and histidine 519 each coordinate Zn(2+).

This sequence belongs to the class-II aminoacyl-tRNA synthetase family. As to quaternary structure, homodimer. The cofactor is Zn(2+).

It localises to the cytoplasm. The catalysed reaction is tRNA(Thr) + L-threonine + ATP = L-threonyl-tRNA(Thr) + AMP + diphosphate + H(+). Catalyzes the attachment of threonine to tRNA(Thr) in a two-step reaction: L-threonine is first activated by ATP to form Thr-AMP and then transferred to the acceptor end of tRNA(Thr). Also edits incorrectly charged L-seryl-tRNA(Thr). The polypeptide is Threonine--tRNA ligase (Porphyromonas gingivalis (strain ATCC 33277 / DSM 20709 / CIP 103683 / JCM 12257 / NCTC 11834 / 2561)).